The chain runs to 453 residues: Phosphoglucosamine mutase (453 aa).

Serine 105 functions as the Phosphoserine intermediate in the catalytic mechanism. The Mg(2+) site is built by serine 105, aspartate 244, aspartate 246, and aspartate 248. The residue at position 105 (serine 105) is a Phosphoserine.

Belongs to the phosphohexose mutase family. The cofactor is Mg(2+). Post-translationally, activated by phosphorylation.

The catalysed reaction is alpha-D-glucosamine 1-phosphate = D-glucosamine 6-phosphate. Functionally, catalyzes the conversion of glucosamine-6-phosphate to glucosamine-1-phosphate. In Blochmanniella pennsylvanica (strain BPEN), this protein is Phosphoglucosamine mutase.